The following is a 277-amino-acid chain: NADPH-dependent 7-cyano-7-deazaguanine reductase (277 aa).

83-85 (VES) is a substrate binding site. 85–86 (SK) is a binding site for NADPH. Cys-184 functions as the Thioimide intermediate in the catalytic mechanism. Asp-191 serves as the catalytic Proton donor. Position 223–224 (223–224 (HE)) interacts with substrate. 252-253 (RG) lines the NADPH pocket.

This sequence belongs to the GTP cyclohydrolase I family. QueF type 2 subfamily. As to quaternary structure, homodimer.

The protein localises to the cytoplasm. It carries out the reaction 7-aminomethyl-7-carbaguanine + 2 NADP(+) = 7-cyano-7-deazaguanine + 2 NADPH + 3 H(+). It functions in the pathway tRNA modification; tRNA-queuosine biosynthesis. Catalyzes the NADPH-dependent reduction of 7-cyano-7-deazaguanine (preQ0) to 7-aminomethyl-7-deazaguanine (preQ1). The chain is NADPH-dependent 7-cyano-7-deazaguanine reductase from Ralstonia nicotianae (strain ATCC BAA-1114 / GMI1000) (Ralstonia solanacearum).